Here is a 382-residue protein sequence, read N- to C-terminus: Small ribosomal subunit protein bS1 homolog (382 aa).

4 S1 motif domains span residues glycine 18–arginine 85, glycine 103–lysine 168, glycine 189–lysine 257, and glycine 274–lysine 343. Serine 244 carries the phosphoserine modification.

This sequence belongs to the bacterial ribosomal protein bS1 family.

This chain is Small ribosomal subunit protein bS1 homolog, found in Bacillus cereus (strain ATCC 10987 / NRS 248).